Here is a 302-residue protein sequence, read N- to C-terminus: Late embryogenesis abundant protein D-29 (302 aa).

Disordered regions lie at residues 25–93 (HMPS…AKEY), 168–193 (VKNA…LADS), and 205–302 (AKEK…NHKN). Basic and acidic residues-rich tracts occupy residues 34-70 (RDYS…HAAN) and 79-93 (AKDR…AKEY). Residues 205 to 286 (AKEKVRDMAD…KAEETIESAK (82 aa)) are compositionally biased toward basic and acidic residues.

It belongs to the LEA type 1 family.

Functionally, LEA protein are late embryonic proteins abundant in higher plant seed embryos. There are two subsets of LEA proteins (5a and 5b), the first ones are expressed when the cotyledon weight reach 80 mg and the second set are expressed above 100 mg. The function of those proteins is not known. The polypeptide is Late embryogenesis abundant protein D-29 (Gossypium hirsutum (Upland cotton)).